Consider the following 61-residue polypeptide: uncharacterized protein (61 aa).

This is an uncharacterized protein from Haemophilus influenzae (strain ATCC 51907 / DSM 11121 / KW20 / Rd).